The sequence spans 292 residues: Shikimate dehydrogenase (NADP(+)) (292 aa).

Residues 25–27 (SKS) and Thr72 contribute to the shikimate site. The active-site Proton acceptor is Lys76. Shikimate is bound by residues Asn97 and Asp113. NADP(+) is bound by residues 137–141 (GAGGA), 161–166 (NRTQSK), and Met230. Tyr232 provides a ligand contact to shikimate. An NADP(+)-binding site is contributed by Gly254.

The protein belongs to the shikimate dehydrogenase family. Homodimer.

The catalysed reaction is shikimate + NADP(+) = 3-dehydroshikimate + NADPH + H(+). It functions in the pathway metabolic intermediate biosynthesis; chorismate biosynthesis; chorismate from D-erythrose 4-phosphate and phosphoenolpyruvate: step 4/7. Involved in the biosynthesis of the chorismate, which leads to the biosynthesis of aromatic amino acids. Catalyzes the reversible NADPH linked reduction of 3-dehydroshikimate (DHSA) to yield shikimate (SA). The protein is Shikimate dehydrogenase (NADP(+)) of Shewanella sp. (strain ANA-3).